We begin with the raw amino-acid sequence, 370 residues long: Peptidyl-prolyl cis-trans isomerase D (370 aa).

Serine 5 is subject to Phosphoserine. The 165-residue stretch at 19-183 (FFDVDIGGER…KLCVIAECGE (165 aa)) folds into the PPIase cyclophilin-type domain. Lysine 171 carries the N6-acetyllysine modification. Residues 185 to 215 (KEGDDGGIFPKDGSGDSHPDFPEDADIDLKD) form a chaperone activity region. Phosphoserine is present on serine 198. The tract at residues 214 to 370 (KDVDKILLIT…EKAVYAKMFA (157 aa)) is interaction with HSP90AB1. 3 TPR repeats span residues 223–256 (TEDL…VDSS), 273–306 (LSCV…DPSN), and 307–340 (TKAL…APED).

Belongs to the cyclophilin-type PPIase family. PPIase D subfamily. Identified in ESR1 or NR3C1/GCR steroid receptor-chaperone complexes. Found in HSP90 chaperone complexes with kinase clients LCK or EIF2AK1. Two monomers associate with one HSP90 homodimer. Interacts with HSP90AA1. Interacts with HSP90AB1; PPID and FKBP4 compete for binding to HSP90AB1 and the interaction is mutually exclusive with the PPID:HSPA8 interaction. Interacts with HSPA8; PPID and STIP1 but not FKBP4 compete for binding to HSPA8 and the interaction is mutually exclusive with the PPID:HSP90AB1 interaction. Interacts with S100A1 and S100A2; the interactions dissociate the PPID:HSP90AA1 interaction. Interacts with S100A6. Interacts with MYB, ILF2, XRCC6, RACK1 and RPS3. Interacts with cytoplasmic dynein 1 intermediate chain (DYNC1I1 or DYNC1I2). Widely expressed.

It is found in the cytoplasm. It localises to the nucleus. The protein resides in the nucleolus. The protein localises to the nucleoplasm. It carries out the reaction [protein]-peptidylproline (omega=180) = [protein]-peptidylproline (omega=0). Less sensitive to inhibition by cyclosporin A than is CYP-18. Its function is as follows. PPIase that catalyzes the cis-trans isomerization of proline imidic peptide bonds in oligopeptides and may therefore assist protein folding. Proposed to act as a co-chaperone in HSP90 complexes such as in unligated steroid receptors heterocomplexes. Different co-chaperones seem to compete for association with HSP90 thus establishing distinct HSP90-co-chaperone-receptor complexes with the potential to exert tissue-specific receptor activity control. May have a preference for estrogen receptor complexes and is not found in glucocorticoid receptor complexes. May be involved in cytoplasmic dynein-dependent movement of the receptor from the cytoplasm to the nucleus. May regulate MYB by inhibiting its DNA-binding activity. Involved in regulation of AHR signaling by promoting the formation of the AHR:ARNT dimer; the function is independent of HSP90 but requires the chaperone activity. Involved in regulation of UV radiation-induced apoptosis. Promotes cell viability in anaplastic lymphoma kinase-positive anaplastic large-cell lymphoma (ALK+ ALCL) cell lines. In terms of biological role, (Microbial infection) May be involved in hepatitis C virus (HCV) replication and release. The chain is Peptidyl-prolyl cis-trans isomerase D from Homo sapiens (Human).